The sequence spans 85 residues: Phosphocarrier protein HPr (85 aa).

Residues 1-85 form the HPr domain; that stretch reads MYEKQVEITA…HLVALMDQLH (85 aa). Residue histidine 15 is the Pros-phosphohistidine intermediate of the active site.

It belongs to the HPr family.

It localises to the cytoplasm. General (non sugar-specific) component of the phosphoenolpyruvate-dependent sugar phosphotransferase system (sugar PTS). This major carbohydrate active-transport system catalyzes the phosphorylation of incoming sugar substrates concomitantly with their translocation across the cell membrane. The phosphoryl group from phosphoenolpyruvate (PEP) is transferred to the phosphoryl carrier protein HPr by enzyme I. Phospho-HPr then transfers it to the PTS EIIA domain. This Vibrio cholerae serotype O1 (strain ATCC 39315 / El Tor Inaba N16961) protein is Phosphocarrier protein HPr (ptsH).